The following is a 431-amino-acid chain: Glutamate-1-semialdehyde 2,1-aminomutase 2 (431 aa).

Position 268 is an N6-(pyridoxal phosphate)lysine (Lys-268).

The protein belongs to the class-III pyridoxal-phosphate-dependent aminotransferase family. HemL subfamily. As to quaternary structure, homodimer. Pyridoxal 5'-phosphate is required as a cofactor.

Its subcellular location is the cytoplasm. The catalysed reaction is (S)-4-amino-5-oxopentanoate = 5-aminolevulinate. The protein operates within porphyrin-containing compound metabolism; protoporphyrin-IX biosynthesis; 5-aminolevulinate from L-glutamyl-tRNA(Glu): step 2/2. This is Glutamate-1-semialdehyde 2,1-aminomutase 2 from Bacillus licheniformis (strain ATCC 14580 / DSM 13 / JCM 2505 / CCUG 7422 / NBRC 12200 / NCIMB 9375 / NCTC 10341 / NRRL NRS-1264 / Gibson 46).